The following is a 129-amino-acid chain: Lysozyme C (129 aa).

One can recognise a C-type lysozyme domain in the interval Lys1–Leu129. 4 disulfides stabilise this stretch: Cys6-Cys127, Cys30-Cys115, Cys64-Cys80, and Cys76-Cys94. Active-site residues include Glu35 and Asp52.

It belongs to the glycosyl hydrolase 22 family. In terms of assembly, monomer.

It localises to the secreted. It carries out the reaction Hydrolysis of (1-&gt;4)-beta-linkages between N-acetylmuramic acid and N-acetyl-D-glucosamine residues in a peptidoglycan and between N-acetyl-D-glucosamine residues in chitodextrins.. Lysozymes have primarily a bacteriolytic function; those in tissues and body fluids are associated with the monocyte-macrophage system and enhance the activity of immunoagents. This chain is Lysozyme C (LYZ), found in Tragopan satyra (Satyr tragopan).